The following is a 250-amino-acid chain: Proteasome subunit alpha type-4-A (250 aa).

Glycyl lysine isopeptide (Lys-Gly) (interchain with G-Cter in ubiquitin) cross-links involve residues Lys40 and Lys64.

The protein belongs to the peptidase T1A family. Component of the 20S core complex of the 26S proteasome. The 26S proteasome is composed of a core protease (CP), known as the 20S proteasome, capped at one or both ends by the 19S regulatory particle (RP/PA700). The 20S proteasome core is composed of 28 subunits that are arranged in four stacked rings, resulting in a barrel-shaped structure. The two end rings are each formed by seven alpha subunits, and the two central rings are each formed by seven beta subunits. The catalytic chamber with the active sites is on the inside of the barrel. Ubiquitous low levels, higher expression in siliques and flowers.

It is found in the cytoplasm. The protein localises to the nucleus. In terms of biological role, the proteasome is a multicatalytic proteinase complex which is characterized by its ability to cleave peptides with Arg, Phe, Tyr, Leu, and Glu adjacent to the leaving group at neutral or slightly basic pH. The proteasome has an ATP-dependent proteolytic activity. This is Proteasome subunit alpha type-4-A (PAC1) from Arabidopsis thaliana (Mouse-ear cress).